The sequence spans 928 residues: Isoleucine--tRNA ligase (928 aa).

The 'HIGH' region signature appears at 57-67 (PFANGNIHMGH). L-isoleucyl-5'-AMP is bound at residue Glu552. Positions 593-597 (KMSKS) match the 'KMSKS' region motif. Lys596 is a binding site for ATP. Positions 887, 890, 907, and 910 each coordinate Zn(2+).

Belongs to the class-I aminoacyl-tRNA synthetase family. IleS type 1 subfamily. As to quaternary structure, monomer. It depends on Zn(2+) as a cofactor.

It is found in the cytoplasm. The catalysed reaction is tRNA(Ile) + L-isoleucine + ATP = L-isoleucyl-tRNA(Ile) + AMP + diphosphate. In terms of biological role, catalyzes the attachment of isoleucine to tRNA(Ile). As IleRS can inadvertently accommodate and process structurally similar amino acids such as valine, to avoid such errors it has two additional distinct tRNA(Ile)-dependent editing activities. One activity is designated as 'pretransfer' editing and involves the hydrolysis of activated Val-AMP. The other activity is designated 'posttransfer' editing and involves deacylation of mischarged Val-tRNA(Ile). This Lacticaseibacillus paracasei (strain ATCC 334 / BCRC 17002 / CCUG 31169 / CIP 107868 / KCTC 3260 / NRRL B-441) (Lactobacillus paracasei) protein is Isoleucine--tRNA ligase.